The primary structure comprises 250 residues: MIPEKRIIRRIQSGGCAIHCQDCSISQLCIPFTLNEHELDQLDNIIERKKPIQKGQTLFKAGDELKSLYAIRSGTIKSYTITEQGDEQITGFHLAGDLVGFDAIGSGHHPSFAQALETSMVCEIPFETLDDLSGKMPNLRQQMMRLMSGEIKGDQDMILLLSKKNAEERLAAFIYNLSRRFAQRGFSPREFRLTMTRGDIGNYLGLTVETISRLLGRFQKSGMLAVKGKYITIENSDALAALAGHTRNVA.

[4Fe-4S] cluster contacts are provided by Cys20, Cys23, and Cys29. The segment at 20–29 (CQDCSISQLC) is essential for the oxygen-regulated activity. An activating region 2A region spans residues 47-50 (ERKK). The activating region 3A stretch occupies residues 60–61 (KA). An activating region 1A region spans residues 71–75 (IRSGT). Position 81 (Ile81) is a region of interest, activating region 3B. The activating region 3C stretch occupies residues 85–87 (GDE). Position 112 (Phe112) is a region of interest, activating region 3D. Residues 116 to 121 (LETSMV) are activating region 1B. Cys122 is a binding site for [4Fe-4S] cluster. An activating region 2B region spans residues 123 to 124 (EI). Positions 127-128 (ET) are activating region 2C. The tract at residues 140–159 (RQQMMRLMSGEIKGDQDMIL) is dimerization. An HTH crp-type domain is found at 164-237 (KNAEERLAAF…GKYITIENSD (74 aa)). The interval 181–191 (FAQRGFSPREF) is activating region 1C. The H-T-H motif DNA-binding region spans 197-216 (RGDIGNYLGLTVETISRLLG).

Homodimer. It depends on [4Fe-4S] cluster as a cofactor.

The protein resides in the cytoplasm. In terms of biological role, global transcription factor that controls the expression of over 100 target genes in response to anoxia. It facilitates the adaptation to anaerobic growth conditions by regulating the expression of gene products that are involved in anaerobic energy metabolism. When the terminal electron acceptor, O(2), is no longer available, it represses the synthesis of enzymes involved in aerobic respiration and increases the synthesis of enzymes required for anaerobic respiration. The protein is Fumarate and nitrate reduction regulatory protein (fnr) of Salmonella muenster.